The following is a 965-amino-acid chain: Isoleucine--tRNA ligase (965 aa).

Positions 68–78 (PYANGSLHMGH) match the 'HIGH' region motif. Glu-582 lines the L-isoleucyl-5'-AMP pocket. The short motif at 623–627 (KMSKS) is the 'KMSKS' region element. Lys-626 contributes to the ATP binding site. The Zn(2+) site is built by Cys-936, Cys-939, Cys-956, and Cys-959.

Belongs to the class-I aminoacyl-tRNA synthetase family. IleS type 1 subfamily. As to quaternary structure, monomer. It depends on Zn(2+) as a cofactor.

The protein resides in the cytoplasm. It carries out the reaction tRNA(Ile) + L-isoleucine + ATP = L-isoleucyl-tRNA(Ile) + AMP + diphosphate. Functionally, catalyzes the attachment of isoleucine to tRNA(Ile). As IleRS can inadvertently accommodate and process structurally similar amino acids such as valine, to avoid such errors it has two additional distinct tRNA(Ile)-dependent editing activities. One activity is designated as 'pretransfer' editing and involves the hydrolysis of activated Val-AMP. The other activity is designated 'posttransfer' editing and involves deacylation of mischarged Val-tRNA(Ile). In Prochlorococcus marinus subsp. pastoris (strain CCMP1986 / NIES-2087 / MED4), this protein is Isoleucine--tRNA ligase.